A 925-amino-acid polypeptide reads, in one-letter code: Serine/threonine-protein phosphatase 1 regulatory subunit 10 (925 aa).

Residues 1-348 (MGSGPIDPKE…EPAPPSEAMD (348 aa)) form an interaction with TOX4 region. A TFIIS N-terminal domain is found at 73 to 147 (KLLNNWLTYS…SDWMAVIRSQ (75 aa)). The disordered stretch occupies residues 147–211 (QSSTQPAEKD…APSHAKFRST (65 aa)). 2 stretches are compositionally biased toward basic and acidic residues: residues 153–166 (AEKD…EGKS) and 174–196 (PLTE…EKPK). Glycyl lysine isopeptide (Lys-Gly) (interchain with G-Cter in SUMO2) cross-links involve residues lysine 179 and lysine 262. 3 disordered regions span residues 304–398 (KIKK…KRKT), 536–555 (TLEP…SKLP), and 587–890 (SIMG…HGGD). The residue at position 313 (serine 313) is a Phosphoserine. Positions 325–336 (KTSTEPSTAKPS) are enriched in low complexity. Residues 357 to 433 (PPVEVPELMD…NKIKDFGEAA (77 aa)) form a necessary for interaction with PPP1CA region. Residue serine 382 is modified to Phosphoserine. Residues 393-408 (GRKRKTVTWPEEGKLR) form a necessary for interaction with PPP1CC region. Residues 394–423 (RKRKTVTWPEEGKLREYFYFELDETERVNV) carry the PP1-binding motif motif. Position 398 is a phosphothreonine; by PKA (threonine 398). The interval 418–619 (TERVNVNKIK…IKQMLVPHGL (202 aa)) is interaction with WDR82. Gly residues predominate over residues 540–551 (GGAGGSPDGAGG). Phosphoserine occurs at positions 545 and 591. Residues 596 to 611 (PSEELLKQPDYSDKIK) are compositionally biased toward basic and acidic residues. Over residues 644 to 655 (PPGPGGPMPGPH) the composition is skewed to pro residues. The segment covering 656 to 665 (GGPGGPGGPV) has biased composition (gly residues). Arginine 668 is subject to Omega-N-methylarginine. A compositionally biased stretch (low complexity) spans 679-693 (GDPFWDGPGDPMRGG). Omega-N-methylarginine occurs at positions 696 and 741. Gly residues-rich tracts occupy residues 728–766 (ARGG…GMSS) and 775–829 (GPGG…AGGG). Composition is skewed to basic and acidic residues over residues 846 to 871 (PHDV…HDGP) and 879 to 890 (RGHDGGHNHGGD). A C3H1-type zinc finger spans residues 891–919 (MSKRPVCRHFMMKGNCRYENNCAFYHPGV).

In terms of assembly, component of the PNUTS-PP1 complex (also named PTW/PP1 complex), composed of PPP1R10/PNUTS, TOX4, WDR82, and PPP1CA (or PPP1CB or PPP1CC). Post-translationally, phosphorylated on Ser-398 by PKA within the region necessary for interaction with PPP1CA.

The protein resides in the nucleus. The protein localises to the chromosome. Substrate-recognition component of the PNUTS-PP1 protein phosphatase complex, a protein phosphatase 1 (PP1) complex that promotes RNA polymerase II transcription pause-release, allowing transcription elongation. Promoter-proximal pausing by RNA polymerase II is a transcription halt following transcription initiation but prior to elongation, which acts as a checkpoint to control that transcripts are favorably configured for transcriptional elongation. The PNUTS-PP1 complex mediates the release of RNA polymerase II from promoter-proximal region of genes by catalyzing dephosphorylation of proteins involved in transcription, such as AFF4, CDK9, MEPCE, INTS12, NCBP1, POLR2M/GDOWN1 and SUPT6H. The PNUTS-PP1 complex also regulates RNA polymerase II transcription termination by mediating dephosphorylation of SUPT5H in termination zones downstream of poly(A) sites, thereby promoting deceleration of RNA polymerase II transcription. PNUTS-PP1 complex is also involved in the response to replication stress by mediating dephosphorylation of POLR2A at 'Ser-5' of the CTD, promoting RNA polymerase II degradation. The PNUTS-PP1 complex also plays a role in the control of chromatin structure and cell cycle progression during the transition from mitosis into interphase. PNUTS-PP1 complex mediates dephosphorylation of MYC, promoting MYC stability by preventing MYC ubiquitination by the SCF(FBXW7) complex. In addition to acts as a substrate-recognition component, PPP1R10/PNUTS also acts as a nuclear targeting subunit for the PNUTS-PP1 complex. In some context, PPP1R10/PNUTS also acts as an inhibitor of protein phosphatase 1 (PP1) activity by preventing access to substrates, such as RB. The protein is Serine/threonine-protein phosphatase 1 regulatory subunit 10 (PPP1R10) of Sus scrofa (Pig).